Consider the following 163-residue polypeptide: Jun dimerization protein 2 (163 aa).

2 disordered regions span residues 1–20 (MMPGQIPDPSVTAGSLPGLG) and 59–89 (KRPQPVKSELDEEEERRKRRREKNKVAAARC). Residue Lys-65 forms a Glycyl lysine isopeptide (Lys-Gly) (interchain with G-Cter in SUMO2) linkage. The bZIP domain occupies 72 to 135 (EERRKRRREK…QQLILMLNRH (64 aa)). A basic motif region spans residues 74 to 96 (RRKRRREKNKVAAARCRNKKKER). Residues 100-128 (LQRESERLELMNAELKTQIEELKLERQQL) form a leucine-zipper region. Phosphothreonine; by MAPK8 is present on Thr-148.

The protein belongs to the bZIP family. ATF subfamily. As to quaternary structure, forms a homodimer or heterodimer with JUN, JUNB, JUND, CEBPG and ATF2 thereby inhibiting transactivation by JUN, ATF2 and CEBPG. Binds multiple DNA elements such as cAMP-response element (CRE) and TPA response element (TRE) either as homodimer or heterodimer. Interacts with IRF2BP1. Phosphorylation of Thr-148 by MAPK8 in response to different stress conditions such as, UV irradiation, oxidatives stress and anisomycin treatments. In terms of processing, polyubiquitinated; probably by IRF2BP1. Ubiquitously expressed in all adult tissues tested as well in embryos.

The protein localises to the nucleus. Its function is as follows. Component of the AP-1 transcription factor that represses transactivation mediated by the Jun family of proteins. Involved in a variety of transcriptional responses associated with AP-1, such as UV-induced apoptosis, cell differentiation, tumorigenesis and antitumogeneris. Can also function as a repressor by recruiting histone deacetylase 3/HDAC3 to the promoter region of JUN. May control transcription via direct regulation of the modification of histones and the assembly of chromatin. In Mus musculus (Mouse), this protein is Jun dimerization protein 2 (Jdp2).